The following is a 721-amino-acid chain: Xylosyl- and glucuronyltransferase LARGE2 (721 aa).

Residues 1–8 (MLPRGRPR) lie on the Cytoplasmic side of the membrane. A helical; Signal-anchor for type II membrane protein transmembrane segment spans residues 9–29 (ALGAAALLLLLLLLGFLLFGG). Residues 30–721 (DLGCERREPG…LQQPQSPARG (692 aa)) lie on the Lumenal side of the membrane. A disordered region spans residues 59 to 89 (DGRLRRAAALDGDPGAGPGDHNRSDCGPQPP). N-linked (GlcNAc...) asparagine glycosylation is found at N80 and N107. A xylosyltransferase activity region spans residues 97 to 372 (LHVAIVCAGH…FLEYDGNLLR (276 aa)). Mn(2+) contacts are provided by D201 and D203. N231 carries N-linked (GlcNAc...) asparagine glycosylation. The segment at 373-715 (RELFVCPSQP…LKYLPALQQP (343 aa)) is glucuronyltransferase activity. Mn(2+)-binding residues include D521 and D523.

It in the C-terminal section; belongs to the glycosyltransferase 49 family. This sequence in the N-terminal section; belongs to the glycosyltransferase 8 family. Interacts with B4GAT1. It depends on Mn(2+) as a cofactor. In terms of tissue distribution, widely expressed. Expressed at high level in placenta, pancreas and kidney compared to LARGE. Not expressed in brain.

The protein resides in the golgi apparatus membrane. It catalyses the reaction 3-O-[beta-D-GlcA-(1-&gt;3)-beta-D-Xyl-(1-&gt;4)-Rib-ol-P-Rib-ol-P-3-beta-D-GalNAc-(1-&gt;3)-beta-D-GlcNAc-(1-&gt;4)-(O-6-P-alpha-D-Man)]-Thr-[protein] + UDP-alpha-D-xylose = 3-O-[alpha-D-Xyl-(1-&gt;3)-beta-D-GlcA-(1-&gt;4)-beta-D-Xyl-(1-&gt;4)-Rib-ol-P-Rib-ol-P-3-beta-D-GalNAc-(1-&gt;3)-beta-D-GlcNAc-(1-&gt;4)-(O-6-P-alpha-D-Man)]-Thr-[protein] + UDP + H(+). It carries out the reaction 3-O-{(1-&gt;[3)-alpha-D-Xyl-(1-&gt;3)-beta-D-GlcA-(1-&gt;](n)-4)-beta-D-Xyl-(1-&gt;4)-Rib-ol-P-Rib-ol-P-3-beta-D-GalNAc-(1-&gt;3)-beta-D-GlcNAc-(1-&gt;4)-O-6-P-alpha-D-Man}-L-Thr-[protein] + UDP-alpha-D-glucuronate = 3-O-{beta-D-GlcA-(1-&gt;[3)-alpha-D-Xyl-(1-&gt;3)-beta-D-GlcA-(1-&gt;](n)-4)-beta-D-Xyl-(1-&gt;4)-Rib-ol-P-Rib-ol-P-3-beta-D-GalNAc-(1-&gt;3)-beta-D-GlcNAc-(1-&gt;4)-O-6-P-alpha-D-Man}-L-Thr-[protein] + UDP + H(+). The catalysed reaction is 3-O-{beta-D-GlcA-(1-&gt;[3)-alpha-D-Xyl-(1-&gt;3)-beta-D-GlcA-(1-&gt;](n)-4)-beta-D-Xyl-(1-&gt;4)-Rib-ol-P-Rib-ol-P-3-beta-D-GalNAc-(1-&gt;3)-beta-D-GlcNAc-(1-&gt;4)-O-6-P-alpha-D-Man}-L-Thr-[protein] + UDP-alpha-D-xylose = 3-O-{(1-&gt;[3)-alpha-D-Xyl-(1-&gt;3)-beta-D-GlcA-(1-&gt;](n+1)-4)-beta-D-Xyl-(1-&gt;4)-Rib-ol-P-Rib-ol-P-3-beta-D-GalNAc-(1-&gt;3)-beta-D-GlcNAc-(1-&gt;4)-O-6-P-alpha-D-Man}-L-Thr-[protein] + UDP + H(+). Its pathway is protein modification; protein glycosylation. Its function is as follows. Bifunctional glycosyltransferase with both alpha-1,3-xylosyltransferase and beta-1,3-glucuronyltransferase activities involved in the maturation of alpha-dystroglycan (DAG1) by glycosylation leading to DAG1 binding to laminin G-like domain-containing extracellular proteins with high affinity and in a phosphorylated-O-mannosyl trisaccharide dependent manner. Elongates the glucuronyl-beta-1,4-xylose-beta disaccharide primer structure by adding repeating units [-3-Xylose-alpha-1,3-GlcA-beta-1-] to produce a heteropolysaccharide. Supports the maturation of DAG1 more effectively than LARGE1. In addition, can modify both heparan sulfate (HS)- and chondroitin/dermatan sulfate (CS/DS)-proteoglycans (PGs), namely GPC4, with a glycosaminoglycan (GAG)-like polysaccharide composed of xylose and glucuronic acid to confer laminin binding. The polypeptide is Xylosyl- and glucuronyltransferase LARGE2 (Homo sapiens (Human)).